The following is a 471-amino-acid chain: Dynein regulatory complex subunit 4 (471 aa).

Residues 1-24 (MAPKKKGTKKESKKDAVATGDIEG) form a disordered region. 2 coiled-coil regions span residues 23-239 (EGAS…YNDI) and 282-425 (LSRA…DVAK).

Belongs to the DRC4 family. Component of the nexin-dynein regulatory complex (N-DRC). Interacts with DRC1, DRC2 and DRC5.

The protein resides in the cytoplasm. Its subcellular location is the cytoskeleton. The protein localises to the flagellum axoneme. It is found in the flagellum basal body. Functionally, component of the nexin-dynein regulatory complex (N-DRC), a key regulator of ciliary/flagellar motility which maintains the alignment and integrity of the distal axoneme and regulates microtubule sliding in motile axonemes. Plays an important role in the assembly of the N-DRC linker. In Chlamydomonas reinhardtii (Chlamydomonas smithii), this protein is Dynein regulatory complex subunit 4.